The sequence spans 37 residues: Large ribosomal subunit protein bL36 (37 aa).

This sequence belongs to the bacterial ribosomal protein bL36 family.

This Salinispora arenicola (strain CNS-205) protein is Large ribosomal subunit protein bL36.